We begin with the raw amino-acid sequence, 544 residues long: MTKFIFVTGGVVSSLGKGIAAASIAAILESRGLKVTMLKLDPYINVDPGTMSPFQHGEVFVTEDGAETDLDLGHYERFIHAKMKKSNNFTTGQVYESVIAKERRGDYLGGTVQVIPHITDEIKHKVREGAGDVDVAIVEVGGTVGDIESLPFLEAIRQMRSNFGRKNTLYVHLSYVPYIAAAGEIKTKPTQHSVKELREIGIQPDILICRMDRELPQDEKRKIALFCNVEENAVIGCYDADSIYKVPGMLHAQGIDDIICEHLDLSLPPADLSVWNGIIDAIEHPARSVNIAMVGKYVDLTESYKSLSEALKHAGIHTRSEVNIHYIDSEEVERDGCAALKGMDAILVPGGFGKRGVEGKIKAVRYAREHNIPYLGICLGMQMALIEYARDMAGMPGANSTEFDLETDFPVVALIDEWVNHDGKIETRDENSNLGGTMRLGGQECVLESGSLAARIYGAEHIVERHRHRYEVNNHYIDRLEAAGLKISGRSAGAEKLVETIELPNHRWFFACQFHPEFTSTPRDGHPLFKAYVEAALAYQADNK.

The interval methionine 1–leucine 265 is amidoligase domain. Position 13 (serine 13) interacts with CTP. Serine 13 serves as a coordination point for UTP. ATP contacts are provided by residues serine 14–isoleucine 19 and aspartate 71. Residues aspartate 71 and glutamate 139 each contribute to the Mg(2+) site. Residues aspartate 146–glutamate 148, lysine 186–glutamine 191, and lysine 222 each bind CTP. Residues lysine 186 to glutamine 191 and lysine 222 each bind UTP. The 253-residue stretch at asparagine 290–aspartate 542 folds into the Glutamine amidotransferase type-1 domain. Residue glycine 351 participates in L-glutamine binding. The active-site Nucleophile; for glutamine hydrolysis is cysteine 378. L-glutamine-binding positions include leucine 379 to glutamine 382, glutamate 402, and arginine 469. Residues histidine 515 and glutamate 517 contribute to the active site.

The protein belongs to the CTP synthase family. As to quaternary structure, homotetramer.

The enzyme catalyses UTP + L-glutamine + ATP + H2O = CTP + L-glutamate + ADP + phosphate + 2 H(+). It carries out the reaction L-glutamine + H2O = L-glutamate + NH4(+). It catalyses the reaction UTP + NH4(+) + ATP = CTP + ADP + phosphate + 2 H(+). It participates in pyrimidine metabolism; CTP biosynthesis via de novo pathway; CTP from UDP: step 2/2. Allosterically activated by GTP, when glutamine is the substrate; GTP has no effect on the reaction when ammonia is the substrate. The allosteric effector GTP functions by stabilizing the protein conformation that binds the tetrahedral intermediate(s) formed during glutamine hydrolysis. Inhibited by the product CTP, via allosteric rather than competitive inhibition. In terms of biological role, catalyzes the ATP-dependent amination of UTP to CTP with either L-glutamine or ammonia as the source of nitrogen. Regulates intracellular CTP levels through interactions with the four ribonucleotide triphosphates. In Laribacter hongkongensis (strain HLHK9), this protein is CTP synthase.